A 441-amino-acid polypeptide reads, in one-letter code: Inner kinetochore subunit mis17 (441 aa).

The span at 160 to 173 (SSILENSPPNKVQR) shows a compositional bias: polar residues. Residues 160–240 (SSILENSPPN…TSSMAPRNLL (81 aa)) form a disordered region. The segment covering 174 to 183 (LSSLDSSQDS) has biased composition (low complexity). A compositionally biased stretch (polar residues) spans 192–201 (VTGTTFSSQA). Positions 217-233 (SLTNQSSSLQSSLQTSS) are enriched in low complexity.

This sequence belongs to the CENP-U/AME1 family. In terms of assembly, component of the heterotetrameric kinetochore subcomplex COMA, which consists of fta2, fta7, mal2 and mis17. The COMA subcomplex is part of a larger constitutive centromere-associated network (CCAN) (also known as central kinetochore Sim4 complex in fission yeast), which is composed of at least cnl2, cnp3, cnp20, fta1, fta2, fta3, fta4, fta6, fta7, mal2, mhf1, mhf2, mis6, mis15, mis17, sim4 and wip1. Interacts with mis6 and mis15.

The protein resides in the nucleus. The protein localises to the chromosome. Its subcellular location is the centromere. It localises to the kinetochore. Component of the kinetochore, a multiprotein complex that assembles on centromeric DNA and attaches chromosomes to spindle microtubules, mediating chromosome segregation and sister chromatid segregation during meiosis and mitosis. Component of the inner kinetochore COMA complex, which connects centromere-associated proteins and the outer kinetochore. COMA interacts with other inner kinetochore proteins to form the inner kinetochore constitutive centromere-associated network (CCAN), which serves as a structural platform for outer kinetochore assembly. In Schizosaccharomyces pombe (strain 972 / ATCC 24843) (Fission yeast), this protein is Inner kinetochore subunit mis17 (mis17).